The following is a 485-amino-acid chain: Adenosylhomocysteinase 1 (485 aa).

The substrate site is built by T64, D139, and E205. T206–T208 contributes to the NAD(+) binding site. K235 and D239 together coordinate substrate. Residues G271–G276, E292, I348–H350, N397, H404, K479, K479–Y483, and Y483 each bind NAD(+).

The protein belongs to the adenosylhomocysteinase family. Homotetramer. The cofactor is NAD(+).

The catalysed reaction is S-adenosyl-L-homocysteine + H2O = L-homocysteine + adenosine. It functions in the pathway amino-acid biosynthesis; L-homocysteine biosynthesis; L-homocysteine from S-adenosyl-L-homocysteine: step 1/1. Functionally, essential protein during embryogenesis. Adenosylhomocysteine is a competitive inhibitor of S-adenosyl-L-methionine-dependent methyl transferase reactions; therefore adenosylhomocysteinase may play a key role in the control of methylations via regulation of the intracellular concentration of adenosylhomocysteine. Required for DNA methylation-dependent gene silencing. In Arabidopsis thaliana (Mouse-ear cress), this protein is Adenosylhomocysteinase 1.